The primary structure comprises 430 residues: Enolase (430 aa).

Glutamine 163 contacts (2R)-2-phosphoglycerate. Residue glutamate 205 is the Proton donor of the active site. 3 residues coordinate Mg(2+): aspartate 242, glutamate 288, and aspartate 315. Positions 340, 369, 370, and 391 each coordinate (2R)-2-phosphoglycerate. Catalysis depends on lysine 340, which acts as the Proton acceptor.

Belongs to the enolase family. Mg(2+) is required as a cofactor.

The protein resides in the cytoplasm. It is found in the secreted. The protein localises to the cell surface. It catalyses the reaction (2R)-2-phosphoglycerate = phosphoenolpyruvate + H2O. Its pathway is carbohydrate degradation; glycolysis; pyruvate from D-glyceraldehyde 3-phosphate: step 4/5. Functionally, catalyzes the reversible conversion of 2-phosphoglycerate (2-PG) into phosphoenolpyruvate (PEP). It is essential for the degradation of carbohydrates via glycolysis. The polypeptide is Enolase (Aster yellows witches'-broom phytoplasma (strain AYWB)).